Consider the following 896-residue polypeptide: Glutamate receptor 2.4 (896 aa).

Positions 1–24 are cleaved as a signal peptide; sequence MKRHLNDVVLVFLVFIFGVKLGKG. Residues 25–565 lie on the Extracellular side of the membrane; sequence QNTTIQVINV…SSLIFFKPLT (541 aa). N-linked (GlcNAc...) asparagine glycans are attached at residues Asn-26, Asn-46, Asn-53, Asn-204, Asn-267, Asn-331, Asn-341, and Asn-527. A helical membrane pass occupies residues 566-586; the sequence is PGLWGMTLGSFFVVGFVVWIL. Topologically, residues 587–595 are cytoplasmic; the sequence is EHRVNSEFT. A helical transmembrane segment spans residues 596 to 616; the sequence is GPPQYQISTMFWFAFSIMVFA. Residues 617–620 lie on the Cytoplasmic side of the membrane; it reads PRER. The helical transmembrane segment at 621-641 threads the bilayer; sequence VMSFTARVVVITWYFIVLVLT. At 642 to 815 the chain is on the extracellular side; that stretch reads QSYTASLSSL…VSFRKLSLDS (174 aa). Residues 816 to 836 form a helical membrane-spanning segment; sequence FLLLFVAAATVCTLALLKFVI. Over 837 to 896 the chain is Cytoplasmic; the sequence is CFLIQNRIILNDEFYRGKRMKEMWLKFMESDGESYISRVRSTCPQVLIQPREEDIDPING.

The protein belongs to the glutamate-gated ion channel (TC 1.A.10.1) family. In terms of assembly, may form heteromers. In terms of tissue distribution, expressed predominantly in roots.

The protein localises to the membrane. Its function is as follows. Glutamate-gated receptor that probably acts as a non-selective cation channel. May be involved in light-signal transduction and calcium homeostasis via the regulation of calcium influx into cells. The sequence is that of Glutamate receptor 2.4 (GLR2.4) from Arabidopsis thaliana (Mouse-ear cress).